The primary structure comprises 440 residues: Probable exopolygalacturonase C (440 aa).

The N-terminal stretch at 1–21 (MLITNPALLGILASLVPLALG) is a signal peptide. N-linked (GlcNAc...) asparagine glycosylation is found at N84 and N151. PbH1 repeat units follow at residues 188-210 (GDDITVSHAIVDATSTGGFPFNT), 217-238 (GTNISITDSVMFNGDDAIAVNT), and 240-261 (SHNIVFARNTIGYQSHGMSIGS). N219 carries N-linked (GlcNAc...) asparagine glycosylation. Catalysis depends on D231, which acts as the Proton donor. H255 is a catalytic residue. N271 is a glycosylation site (N-linked (GlcNAc...) asparagine). The stretch at 272–293 (ITNLRFEDVTVIDALYAARFKS) is one PbH1 4 repeat. N313 is a glycosylation site (N-linked (GlcNAc...) asparagine). Residues C389 and C395 are joined by a disulfide bond. N-linked (GlcNAc...) asparagine glycosylation is present at N434.

The protein belongs to the glycosyl hydrolase 28 family.

It is found in the secreted. The catalysed reaction is [(1-&gt;4)-alpha-D-galacturonosyl](n) + H2O = alpha-D-galacturonate + [(1-&gt;4)-alpha-D-galacturonosyl](n-1). In terms of biological role, specific in hydrolyzing the terminal glycosidic bond of polygalacturonic acid and oligogalacturonates. This is Probable exopolygalacturonase C (pgxC) from Aspergillus fumigatus (strain ATCC MYA-4609 / CBS 101355 / FGSC A1100 / Af293) (Neosartorya fumigata).